A 271-amino-acid polypeptide reads, in one-letter code: MADDNQNEVKDEVVADIAPFDPTKKKKKKEVVIQDTTDDSVGKLAEKAEACTASEGQESTFAGLKKKKKKPIETSILNEESGDAVEDLNERTGEDEEGEGIVLETPSYPWEGSDRDYTYEELLDRVFTILRENNPDLAGDRRRTVMRPPQVLREGTKKAVFVNFMDLCKTMHRQPDHVMAFLLAELGTSGSLDGQQRLVVKGRFAPKNFEGILRRYVNEYVICLGCQSPDTILSKENRLFFLRCEKCGSGRSVAPNKAGFMARVGRRNAGT.

A C4-type zinc finger spans residues cysteine 223–cysteine 247.

It belongs to the eIF-2-beta/eIF-5 family. As to quaternary structure, eukaryotic translation initiation factor 2 eIF2 is a heterotrimeric complex composed of an alpha, a beta and a gamma subunit.

Its subcellular location is the cytoplasm. It localises to the cytosol. Component of the eIF2 complex that functions in the early steps of protein synthesis by forming a ternary complex with GTP and initiator tRNA. This complex binds to a 40S ribosomal subunit, followed by mRNA binding to form a 43S pre-initiation complex (43S PIC). Junction of the 60S ribosomal subunit to form the 80S initiation complex is preceded by hydrolysis of the GTP bound to eIF2 and release of an eIF2-GDP binary complex. In order for eIF2 to recycle and catalyze another round of initiation, the GDP bound to eIF2 must exchange with GTP by way of a reaction catalyzed by eIF2B. The protein is Eukaryotic translation initiation factor 2 subunit beta of Malus domestica (Apple).